A 517-amino-acid polypeptide reads, in one-letter code: Maturase K (517 aa).

It belongs to the intron maturase 2 family. MatK subfamily.

It is found in the plastid. The protein resides in the chloroplast. Its function is as follows. Usually encoded in the trnK tRNA gene intron. Probably assists in splicing its own and other chloroplast group II introns. The protein is Maturase K of Paris tetraphylla.